The chain runs to 292 residues: MNVPHSVKSRADAYWRLMRFDKPIGIFLLLWPALWALWIAGEGRPDPGVAAVIVFGVVLMRAAGCVINDYADREFDPHVERTRLRPIAAGEVTSKEALILFMVLCLTAFALVLTMNWLTIALSVPGAFLAASYPFTKRYTHLPQAYLGLAFGWAIPMTFAAQTGSIPVVAWALYAATVLWALIYDTMYAMVDREDDVKIGIKSTAILFGKYDREIIGALQIAMLAILAGIGRYLGLGGLYALGLAAAAGFSVYQQVLIFRREKSKCFRAFLNNHWFGAAVFAGLFADYLWAG.

A run of 8 helical transmembrane segments spans residues 23–43 (PIGI…AGEG), 47–67 (PGVA…GCVI), 98–118 (LILF…MNWL), 141–161 (HLPQ…TFAA), 164–184 (GSIP…ALIY), 211–231 (YDRE…AGIG), 233–253 (YLGL…FSVY), and 270–290 (FLNN…DYLW).

This sequence belongs to the UbiA prenyltransferase family. Mg(2+) is required as a cofactor.

It is found in the cell inner membrane. It catalyses the reaction all-trans-octaprenyl diphosphate + 4-hydroxybenzoate = 4-hydroxy-3-(all-trans-octaprenyl)benzoate + diphosphate. It participates in cofactor biosynthesis; ubiquinone biosynthesis. Catalyzes the prenylation of para-hydroxybenzoate (PHB) with an all-trans polyprenyl group. Mediates the second step in the final reaction sequence of ubiquinone-8 (UQ-8) biosynthesis, which is the condensation of the polyisoprenoid side chain with PHB, generating the first membrane-bound Q intermediate 3-octaprenyl-4-hydroxybenzoate. The polypeptide is 4-hydroxybenzoate octaprenyltransferase (Methylococcus capsulatus (strain ATCC 33009 / NCIMB 11132 / Bath)).